The following is a 300-amino-acid chain: Ribonuclease HIII (300 aa).

Residues 83 to 300 form the RNase H type-2 domain; that stretch reads IPIIGSDEVG…THKAQALLTK (218 aa). Positions 89, 90, and 194 each coordinate a divalent metal cation.

The protein belongs to the RNase HII family. RnhC subfamily. The cofactor is Mn(2+). Requires Mg(2+) as cofactor.

It localises to the cytoplasm. It carries out the reaction Endonucleolytic cleavage to 5'-phosphomonoester.. Functionally, endonuclease that specifically degrades the RNA of RNA-DNA hybrids. In Streptococcus pyogenes serotype M28 (strain MGAS6180), this protein is Ribonuclease HIII.